A 422-amino-acid chain; its full sequence is Histidine--tRNA ligase (422 aa).

The protein belongs to the class-II aminoacyl-tRNA synthetase family. In terms of assembly, homodimer.

It localises to the cytoplasm. The enzyme catalyses tRNA(His) + L-histidine + ATP = L-histidyl-tRNA(His) + AMP + diphosphate + H(+). In Vibrio parahaemolyticus serotype O3:K6 (strain RIMD 2210633), this protein is Histidine--tRNA ligase.